The chain runs to 680 residues: WD repeat-containing protein 48 homolog (680 aa).

WD repeat units follow at residues 26-65, 71-110, 113-152, 164-203, 206-245, 248-287, 290-329, and 350-389; these read QHRNGVNALQLDANNGKLYSAGRDAIIRVWNTRTDSSEKY, HHNDWVNDIVLCCNGRNLISASCDTTVKVWNAQKGFCMST, THRDYVQALAYAKDREQVASAGLDKAIFLWDVNTLTALTA, GSKDSIYSLAMNPSGTVIVSGSTENILRIWDPRTCMRIMK, GHTENVRCLVVSPDGNQVVSGSSDGTIKVWNLGQQRCVQT, VHKEGVWSLLMSENFQYIISGSRDRNIIVTEMRNPSNKTL, EEQAPVLSLGYNIDKTGVWATTWNSDIRCWKLPMYDRCTL, and KGGAAIKECAVLNDKRYIITKDSQDQVVVYDVLRVVKKEQ. A disordered region spans residues 592-616; sequence ETTPSGGNANNSLQNSQSDANSEGS.

It belongs to the WD repeat WDR48 family. Catalytic component of the Usp12-46 deubiquitylase complex consisting of Usp12-46, Wdr20 and Uaf1; regulatory subunit that, together wtih Wdr20, stabilizes Usp12-46. The Usp12-46 deubiquitylase complex associates with arr/arrow; the interaction leads to deubiquitination and stabilization of arr/arrow.

Regulatory component of the Usp12-46 deubiquitylase complex. activates deubiquitination by increasing the catalytic turnover without increasing the affinity of deubiquitinating enzymes for the substrate. The complex deubiquitylates the wg/wingless-signaling receptor arr/arrow, which stabilizes the receptor and increases its concentration at the cell surface; this enhances the sensitivity of cells to wg/wingless-signal stimulation. This increases the amplitude and spatial range of the signaling response to the wg/wingless morphogen gradient, facilitating the precise concentration-dependent regulation of its target genes. Together with Wdr20 and Usp12-46 required for wg/wingless-mediated signaling in the wing imaginal disc and for wg/wingless-dependent regulation of intestinal stem cell proliferation. The protein is WD repeat-containing protein 48 homolog of Drosophila sechellia (Fruit fly).